A 359-amino-acid polypeptide reads, in one-letter code: Peptide chain release factor 1 (359 aa).

Q235 bears the N5-methylglutamine mark.

It belongs to the prokaryotic/mitochondrial release factor family. Post-translationally, methylated by PrmC. Methylation increases the termination efficiency of RF1.

It localises to the cytoplasm. Functionally, peptide chain release factor 1 directs the termination of translation in response to the peptide chain termination codons UAG and UAA. This Ehrlichia ruminantium (strain Gardel) protein is Peptide chain release factor 1.